Here is a 533-residue protein sequence, read N- to C-terminus: Glucans biosynthesis protein D (533 aa).

The tat-type signal signal peptide spans 1-28 (MQRRHFLKNAAAALAALGLPALPPWALA).

This sequence belongs to the OpgD/OpgG family. Predicted to be exported by the Tat system. The position of the signal peptide cleavage has not been experimentally proven.

Its subcellular location is the periplasm. The protein operates within glycan metabolism; osmoregulated periplasmic glucan (OPG) biosynthesis. Its function is as follows. Probably involved in the control of the structural glucose backbone of osmoregulated periplasmic glucans (OPGs). In Xanthomonas campestris pv. campestris (strain 8004), this protein is Glucans biosynthesis protein D.